Here is an 84-residue protein sequence, read N- to C-terminus: MKLTIFALVACFFILQIAAFPLEEAATAEEIEQGEHIRVKRVTCDILSVEAKGVKLNDAACAAHCLFRGRSGGYCNGKRVCVCR.

A signal peptide spans 1–19 (MKLTIFALVACFFILQIAA). Positions 20 to 41 (FPLEEAATAEEIEQGEHIRVKR) are excised as a propeptide. Disulfide bonds link cysteine 44/cysteine 75, cysteine 61/cysteine 81, and cysteine 65/cysteine 83.

It belongs to the invertebrate defensin family. Type 1 subfamily.

It localises to the secreted. Functionally, bactericidal protein produced in response to injury. It is cytotoxic to Gram-positive bacteria. This chain is Tenecin-1, found in Tenebrio molitor (Yellow mealworm beetle).